The following is a 1343-amino-acid chain: DNA-directed RNA polymerase subunit beta (1343 aa).

This sequence belongs to the RNA polymerase beta chain family. The RNAP catalytic core consists of 2 alpha, 1 beta, 1 beta' and 1 omega subunit. When a sigma factor is associated with the core the holoenzyme is formed, which can initiate transcription.

It catalyses the reaction RNA(n) + a ribonucleoside 5'-triphosphate = RNA(n+1) + diphosphate. Functionally, DNA-dependent RNA polymerase catalyzes the transcription of DNA into RNA using the four ribonucleoside triphosphates as substrates. The polypeptide is DNA-directed RNA polymerase subunit beta (Shewanella pealeana (strain ATCC 700345 / ANG-SQ1)).